The chain runs to 92 residues: Cell division topological specificity factor (92 aa).

This sequence belongs to the MinE family.

Its function is as follows. Prevents the cell division inhibition by proteins MinC and MinD at internal division sites while permitting inhibition at polar sites. This ensures cell division at the proper site by restricting the formation of a division septum at the midpoint of the long axis of the cell. This chain is Cell division topological specificity factor, found in Colwellia psychrerythraea (strain 34H / ATCC BAA-681) (Vibrio psychroerythus).